We begin with the raw amino-acid sequence, 20 residues long: Equinatoxin-1'' (20 aa).

The segment at 3 to 12 is plays an important role in the hemolytic activity; the sequence is AVAGAVIEGA. Positions 11 to 20 are N-terminal region; it reads GATLTFNVLQ.

This sequence belongs to the actinoporin family. Sea anemone subfamily. Octamer or nonamer in membranes. Monomer in the soluble state.

It localises to the secreted. The protein localises to the nematocyst. It is found in the target cell membrane. Its function is as follows. Pore-forming protein that forms cations-selective hydrophilic pores of around 1 nm and causes cardiac stimulation and cytolysis. Pore formation is a multi-step process that involves specific recognition of membrane sphingomyelin (but neither cholesterol nor phosphatidylcholine) using aromatic rich region and adjacent phosphocholine (POC) binding site, firm binding to the membrane (mainly driven by hydrophobic interactions) accompanied by the transfer of the N-terminal region to the lipid-water interface and finally pore formation after oligomerization of monomers. Cytolytic effects include red blood cells hemolysis, platelet aggregation and lysis, cytotoxic and cytostatic effects on fibroblasts. Lethality in mammals has been ascribed to severe vasospasm of coronary vessels, cardiac arrhythmia, and inotropic effects. The sequence is that of Equinatoxin-1'' from Actinia equina (Beadlet anemone).